We begin with the raw amino-acid sequence, 344 residues long: UDP-3-O-acylglucosamine N-acyltransferase (344 aa).

The active-site Proton acceptor is the histidine 236.

This sequence belongs to the transferase hexapeptide repeat family. LpxD subfamily. In terms of assembly, homotrimer.

The enzyme catalyses a UDP-3-O-[(3R)-3-hydroxyacyl]-alpha-D-glucosamine + a (3R)-hydroxyacyl-[ACP] = a UDP-2-N,3-O-bis[(3R)-3-hydroxyacyl]-alpha-D-glucosamine + holo-[ACP] + H(+). It participates in bacterial outer membrane biogenesis; LPS lipid A biosynthesis. Catalyzes the N-acylation of UDP-3-O-acylglucosamine using 3-hydroxyacyl-ACP as the acyl donor. Is involved in the biosynthesis of lipid A, a phosphorylated glycolipid that anchors the lipopolysaccharide to the outer membrane of the cell. The polypeptide is UDP-3-O-acylglucosamine N-acyltransferase (Nitratidesulfovibrio vulgaris (strain ATCC 29579 / DSM 644 / CCUG 34227 / NCIMB 8303 / VKM B-1760 / Hildenborough) (Desulfovibrio vulgaris)).